The primary structure comprises 842 residues: Protein P (842 aa).

A terminal protein domain (TP) region spans residues 1–177 (MPLSYQHFRR…FCGSPYSWEQ (177 aa)). The spacer stretch occupies residues 178–345 (ELHHGAFLDG…YCLTHLVNLL (168 aa)). The interval 205 to 271 (SRPPVGSSIQ…RHAKNIASRP (67 aa)) is disordered. Residues 223-239 (GPQSQQRPLDGSQQGRS) show a composition bias toward polar residues. The segment at 346-689 (EDWGPCTEHG…YLNLYPVARQ (344 aa)) is polymerase/reverse transcriptase domain (RT). Residues 356–599 (KHHIRIPRTP…YSLNFMGYVI (244 aa)) enclose the Reverse transcriptase domain. Residues Asp-428, Asp-550, and Asp-551 each contribute to the Mg(2+) site.

The protein belongs to the hepadnaviridae P protein family.

The catalysed reaction is DNA(n) + a 2'-deoxyribonucleoside 5'-triphosphate = DNA(n+1) + diphosphate. The enzyme catalyses Endonucleolytic cleavage to 5'-phosphomonoester.. With respect to regulation, activated by host HSP70 and HSP40 in vitro to be able to bind the epsilon loop of the pgRNA. Because deletion of the RNase H region renders the protein partly chaperone-independent, the chaperones may be needed indirectly to relieve occlusion of the RNA-binding site by this domain. Inhibited by several reverse-transcriptase inhibitors: Lamivudine, Adefovir and Entecavir. Functionally, multifunctional enzyme that converts the viral RNA genome into dsDNA in viral cytoplasmic capsids. This enzyme displays a DNA polymerase activity that can copy either DNA or RNA templates, and a ribonuclease H (RNase H) activity that cleaves the RNA strand of RNA-DNA heteroduplexes in a partially processive 3'- to 5'-endonucleasic mode. Neo-synthesized pregenomic RNA (pgRNA) are encapsidated together with the P protein, and reverse-transcribed inside the nucleocapsid. Initiation of reverse-transcription occurs first by binding the epsilon loop on the pgRNA genome, and is initiated by protein priming, thereby the 5'-end of (-)DNA is covalently linked to P protein. Partial (+)DNA is synthesized from the (-)DNA template and generates the relaxed circular DNA (RC-DNA) genome. After budding and infection, the RC-DNA migrates in the nucleus, and is converted into a plasmid-like covalently closed circular DNA (cccDNA). The activity of P protein does not seem to be necessary for cccDNA generation, and is presumably released from (+)DNA by host nuclear DNA repair machinery. The chain is Protein P from Hepatitis B virus genotype E subtype ayw4 (isolate Kou) (HBV-E).